A 253-amino-acid polypeptide reads, in one-letter code: Ribosomal RNA small subunit methyltransferase A (253 aa).

Residues histidine 12, leucine 14, glycine 39, glutamate 60, aspartate 81, and asparagine 104 each contribute to the S-adenosyl-L-methionine site.

It belongs to the class I-like SAM-binding methyltransferase superfamily. rRNA adenine N(6)-methyltransferase family. RsmA subfamily.

It localises to the cytoplasm. The catalysed reaction is adenosine(1518)/adenosine(1519) in 16S rRNA + 4 S-adenosyl-L-methionine = N(6)-dimethyladenosine(1518)/N(6)-dimethyladenosine(1519) in 16S rRNA + 4 S-adenosyl-L-homocysteine + 4 H(+). Specifically dimethylates two adjacent adenosines (A1518 and A1519) in the loop of a conserved hairpin near the 3'-end of 16S rRNA in the 30S particle. May play a critical role in biogenesis of 30S subunits. In Acidovorax ebreus (strain TPSY) (Diaphorobacter sp. (strain TPSY)), this protein is Ribosomal RNA small subunit methyltransferase A.